Consider the following 64-residue polypeptide: Large ribosomal subunit protein bL35c (64 aa).

This sequence belongs to the bacterial ribosomal protein bL35 family.

Its subcellular location is the plastid. It localises to the chloroplast. The polypeptide is Large ribosomal subunit protein bL35c (Trieres chinensis (Marine centric diatom)).